We begin with the raw amino-acid sequence, 920 residues long: Ubiquitin ligase-binding protein BUL2 (920 aa).

A compositionally biased stretch (polar residues) spans 1-10 (MTFTFSTSSR). The segment at 1 to 89 (MTFTFSTSSR…EENSLEMDCT (89 aa)) is disordered. Residue Thr-22 is modified to Phosphothreonine. Polar residues predominate over residues 35–57 (QQLSSNSTDNSLHPNSGQTPRAS). Basic and acidic residues predominate over residues 73–82 (DRLRQEREEN). Residues 129 to 133 (FPPSY) carry the PY-motif motif. Ser-557 is modified (phosphoserine).

This sequence belongs to the BUL1 family. In terms of assembly, component of the RSP5-BUL1/2 ubiquitin ligase complex composed of at least RSP5 and BUL1 or BUL2.

The protein localises to the cytoplasm. Its pathway is protein modification; protein ubiquitination. In terms of biological role, component of a RSP5 ubiquitin ligase complex which specifies polyubiquitination and intracellular trafficking of the general amino acid permease GAP1 as well as other permeases such as PMA1. The RSP5-BUL1/2 complex is also necessary for the heat-shock element (HSE)-mediated gene expression, nitrogen starvation GLN3-dependent transcription and pressure-induced differential regulation of the 2 tryptophan permeases TAT1 and TAT2. This is Ubiquitin ligase-binding protein BUL2 (BUL2) from Saccharomyces cerevisiae (strain ATCC 204508 / S288c) (Baker's yeast).